Reading from the N-terminus, the 396-residue chain is Elongation factor Tu (396 aa).

In terms of domain architecture, tr-type G spans 11–205; it reads KPHVNIGTIG…TVDEYIPTPE (195 aa). The G1 stretch occupies residues 20 to 27; sequence GHVDHGKT. 20–27 is a binding site for GTP; that stretch reads GHVDHGKT. Thr-27 contacts Mg(2+). The interval 61-65 is G2; sequence GITIN. The tract at residues 82–85 is G3; the sequence is DAPG. GTP is bound by residues 82–86 and 137–140; these read DAPGH and NKCD. The tract at residues 137 to 140 is G4; the sequence is NKCD. Positions 175 to 177 are G5; sequence SAL.

This sequence belongs to the TRAFAC class translation factor GTPase superfamily. Classic translation factor GTPase family. EF-Tu/EF-1A subfamily. Monomer.

It is found in the cytoplasm. It carries out the reaction GTP + H2O = GDP + phosphate + H(+). Functionally, GTP hydrolase that promotes the GTP-dependent binding of aminoacyl-tRNA to the A-site of ribosomes during protein biosynthesis. This is Elongation factor Tu from Lactobacillus helveticus (strain DPC 4571).